Here is a 190-residue protein sequence, read N- to C-terminus: dCTP deaminase, dUMP-forming (190 aa).

DCTP is bound by residues 101 to 106 (KSSLGR), D119, 127 to 129 (TLE), Q148, Y162, and Q174. The active-site Proton donor/acceptor is E129. Residues 161–190 (PYGSSGVGSKYQGQRGPTPSRSYQNFIRST) are disordered. Residues 171–190 (YQGQRGPTPSRSYQNFIRST) show a composition bias toward polar residues.

This sequence belongs to the dCTP deaminase family. In terms of assembly, homotrimer.

The catalysed reaction is dCTP + 2 H2O = dUMP + NH4(+) + diphosphate. The protein operates within pyrimidine metabolism; dUMP biosynthesis; dUMP from dCTP: step 1/1. Functionally, bifunctional enzyme that catalyzes both the deamination of dCTP to dUTP and the hydrolysis of dUTP to dUMP without releasing the toxic dUTP intermediate. In Mycobacterium marinum (strain ATCC BAA-535 / M), this protein is dCTP deaminase, dUMP-forming.